The sequence spans 235 residues: RNA polymerase sigma-E factor (235 aa).

The Polymerase core binding signature appears at 82–95 (DLISVGTIGLIKAV). A DNA-binding region (H-T-H motif) is located at residues 202–221 (QKEVADMLGISQSYISRLEK).

Belongs to the sigma-70 factor family.

Sigma factors are initiation factors that promote the attachment of RNA polymerase to specific initiation sites and are then released. This sigma factor is responsible for the expression of sporulation specific genes. This Clostridium acetobutylicum (strain ATCC 824 / DSM 792 / JCM 1419 / IAM 19013 / LMG 5710 / NBRC 13948 / NRRL B-527 / VKM B-1787 / 2291 / W) protein is RNA polymerase sigma-E factor (sigE).